A 549-amino-acid chain; its full sequence is MKPDRGPRGKQSQAELMMMTVADVIKQLVEAHEQGKDVNLNKLKTKTSAKYGLSAQPRLVDIIAAVPPQYRKILVPKLKAKPIRTASGIAVVAVMCKPHRCPHINFTGNICVYCPGGPDSDFEYSTQSYTGYEPTSMRAIRARYDPYLQTRHRVEQLKQLGHSVDKVEFIVMGGTFMALSEDYRDFFIRNLHDALSGHTSNSVSEAVRYSERSNTKCVGITIETRPDYCLKRHLSDMLSYGCTRLEIGVQSVYEDVARDTNRGHTVKAVCESFHMAKDAGFKVVSHMMPDLPNVGLERDTEQFIEFFENPAFRPDGMKLYPTLVIRGTGLYELWKTGRYRSYSPSTLVDLVARILALVPPWTRVYRVQRDIPMPLVSSGVEHGNLRELALARMKDLGTECRDVRTREVGIQEIHHKVRPYQVELIRRDYVANGGWETFLSYEDPEQDILIGLLRLRKCSEQSFRPELKGGVSIVRELHVYGSVVPISSRDPSKFQHQGFGMLLMEEAERIAREEHGSCKIAVISGVGTRNYYRKLGYELEGPYMVKKLD.

Positions 84–374 constitute a Radical SAM core domain; the sequence is RTASGIAVVA…YRVQRDIPMP (291 aa). 3 residues coordinate [4Fe-4S] cluster: Cys101, Cys111, and Cys114. Residues Lys166, 476 to 479, 499 to 501, and Tyr532 each bind acetyl-CoA; these read ELHV and FGM. Positions 398–549 constitute an N-acetyltransferase domain; sequence TECRDVRTRE…EGPYMVKKLD (152 aa).

It belongs to the ELP3 family. As to quaternary structure, component of the elongator complex. Interacts with transcriptional repressors snai1 and snai2; interaction with snai1 inhibits its ubiquitination and stabilizes it. [4Fe-4S] cluster serves as cofactor.

It localises to the cytoplasm. Its subcellular location is the nucleus. The enzyme catalyses uridine(34) in tRNA + acetyl-CoA + S-adenosyl-L-methionine + H2O = 5-(carboxymethyl)uridine(34) in tRNA + 5'-deoxyadenosine + L-methionine + CoA + 2 H(+). Its pathway is tRNA modification; 5-methoxycarbonylmethyl-2-thiouridine-tRNA biosynthesis. Functionally, catalytic tRNA acetyltransferase subunit of the elongator complex which is required for multiple tRNA modifications, including mcm5U (5-methoxycarbonylmethyl uridine), mcm5s2U (5-methoxycarbonylmethyl-2-thiouridine), and ncm5U (5-carbamoylmethyl uridine). In the elongator complex, acts as a tRNA uridine(34) acetyltransferase by mediating formation of carboxymethyluridine in the wobble base at position 34 in tRNAs. Stabilizes transcriptional repressor snai1 by inhibiting its ubiquitination which promotes neural crest cell migration. In Xenopus tropicalis (Western clawed frog), this protein is Elongator complex protein 3.